The following is a 229-amino-acid chain: Large ribosomal subunit protein uL1 (229 aa).

Belongs to the universal ribosomal protein uL1 family. In terms of assembly, part of the 50S ribosomal subunit.

In terms of biological role, binds directly to 23S rRNA. The L1 stalk is quite mobile in the ribosome, and is involved in E site tRNA release. Its function is as follows. Protein L1 is also a translational repressor protein, it controls the translation of the L11 operon by binding to its mRNA. The chain is Large ribosomal subunit protein uL1 from Thermus thermophilus (strain ATCC BAA-163 / DSM 7039 / HB27).